Consider the following 413-residue polypeptide: Multifunctional CCA protein (413 aa).

2 residues coordinate ATP: Gly8 and Arg11. Residues Gly8 and Arg11 each coordinate CTP. Asp21 and Asp23 together coordinate Mg(2+). Residues Arg91, Arg143, and Arg146 each coordinate ATP. Positions 91, 143, and 146 each coordinate CTP. One can recognise an HD domain in the interval 232–333 (TGVHVMMVID…VRLLERADAL (102 aa)).

The protein belongs to the tRNA nucleotidyltransferase/poly(A) polymerase family. Bacterial CCA-adding enzyme type 1 subfamily. As to quaternary structure, monomer. Can also form homodimers and oligomers. It depends on Mg(2+) as a cofactor. Ni(2+) serves as cofactor.

It catalyses the reaction a tRNA precursor + 2 CTP + ATP = a tRNA with a 3' CCA end + 3 diphosphate. The catalysed reaction is a tRNA with a 3' CCA end + 2 CTP + ATP = a tRNA with a 3' CCACCA end + 3 diphosphate. Functionally, catalyzes the addition and repair of the essential 3'-terminal CCA sequence in tRNAs without using a nucleic acid template. Adds these three nucleotides in the order of C, C, and A to the tRNA nucleotide-73, using CTP and ATP as substrates and producing inorganic pyrophosphate. tRNA 3'-terminal CCA addition is required both for tRNA processing and repair. Also involved in tRNA surveillance by mediating tandem CCA addition to generate a CCACCA at the 3' terminus of unstable tRNAs. While stable tRNAs receive only 3'-terminal CCA, unstable tRNAs are marked with CCACCA and rapidly degraded. This Burkholderia mallei (strain NCTC 10247) protein is Multifunctional CCA protein.